The chain runs to 630 residues: Telomere repeat-binding protein 5 (630 aa).

3 disordered regions span residues 1-38 (MVLQ…SENH), 56-78 (EGGN…CAVK), and 308-327 (YTAS…GSPR). The span at 57–71 (GGNSSSSSNNTSGNN) shows a compositional bias: low complexity. The span at 309–325 (TASQSEETNKNEGQSGS) shows a compositional bias: polar residues. The 80-residue stretch at 354-433 (VKLGIKSFRV…SDTLGFCLEP (80 aa)) folds into the Ubiquitin-like domain. The segment at 463 to 489 (LPSPGKHAKPSNSVESDLDSKPSAPNR) is disordered. One can recognise an HTH myb-type domain in the interval 523 to 582 (AQRRIRRPFSVAEVEALVQAVERLGTGRWRDVKLRAFDNAKHRTYVDLKDKWKTLVHTAR). A DNA-binding region (H-T-H motif) is located at residues 551-578 (WRDVKLRAFDNAKHRTYVDLKDKWKTLV).

Homodimer. As to expression, expressed ubiquitously.

The protein resides in the nucleus. Its function is as follows. Binds specifically to the plant telomeric double-stranded DNA sequences. At least 6 repeats of telomeric sequences are required for binding. This chain is Telomere repeat-binding protein 5 (TRP5), found in Arabidopsis thaliana (Mouse-ear cress).